Reading from the N-terminus, the 309-residue chain is Ribosomal RNA small subunit methyltransferase H (309 aa).

Residues 34-36 (GGH), Asp54, Phe80, Asp102, and Gln109 contribute to the S-adenosyl-L-methionine site.

The protein belongs to the methyltransferase superfamily. RsmH family.

The protein localises to the cytoplasm. The catalysed reaction is cytidine(1402) in 16S rRNA + S-adenosyl-L-methionine = N(4)-methylcytidine(1402) in 16S rRNA + S-adenosyl-L-homocysteine + H(+). Functionally, specifically methylates the N4 position of cytidine in position 1402 (C1402) of 16S rRNA. This is Ribosomal RNA small subunit methyltransferase H from Cellvibrio japonicus (strain Ueda107) (Pseudomonas fluorescens subsp. cellulosa).